A 258-amino-acid polypeptide reads, in one-letter code: Type III pantothenate kinase (258 aa).

6–13 is an ATP binding site; sequence DVGNTNIV. Substrate-binding positions include Tyr100 and 107 to 110; that span reads GADR. The active-site Proton acceptor is the Asp109. Asp129 lines the K(+) pocket. Thr132 is an ATP binding site. Thr184 lines the substrate pocket.

This sequence belongs to the type III pantothenate kinase family. Homodimer. NH4(+) serves as cofactor. The cofactor is K(+).

The protein localises to the cytoplasm. It catalyses the reaction (R)-pantothenate + ATP = (R)-4'-phosphopantothenate + ADP + H(+). Its pathway is cofactor biosynthesis; coenzyme A biosynthesis; CoA from (R)-pantothenate: step 1/5. In terms of biological role, catalyzes the phosphorylation of pantothenate (Pan), the first step in CoA biosynthesis. In Clostridium botulinum (strain Kyoto / Type A2), this protein is Type III pantothenate kinase.